The chain runs to 891 residues: 26S proteasome non-ATPase regulatory subunit 2 homolog A (891 aa).

The disordered stretch occupies residues 1–44 (MAPTQDPNSVGGGAKKDEATLKVPSKDPKKKDEKKDEDLSEEDL). The short motif at 14 to 21 (AKKDEATL) is the Nuclear localization signal element. Residues 14 to 37 (AKKDEATLKVPSKDPKKKDEKKDE) are compositionally biased toward basic and acidic residues. K218 participates in a covalent cross-link: Glycyl lysine isopeptide (Lys-Gly) (interchain with G-Cter in ubiquitin). T219 is subject to O-acetylthreonine. 7 PC repeats span residues 414–447 (SAAA…PIIA), 448–484 (GALL…SVRI), 485–519 (GAIM…PLDV), 522–556 (FASL…AELG), 565–594 (LGLG…KIRK), 674–705 (LALG…EVAM), and 724–739 (AGML…KDMS).

It belongs to the proteasome subunit S2 family. Component of the 19S regulatory particle (RP/PA700) base subcomplex of the 26S proteasome. The 26S proteasome is composed of a core protease (CP), known as the 20S proteasome, capped at one or both ends by the 19S regulatory particle (RP/PA700). The RP/PA700 complex is composed of at least 17 different subunits in two subcomplexes, the base and the lid, which form the portions proximal and distal to the 20S proteolytic core, respectively. Interacts with JMJ27. In terms of tissue distribution, expressed in stems, leaves, buds, flowers, siliques and developing seeds.

It is found in the nucleus. Its subcellular location is the cytoplasm. Acts as a regulatory subunit of the 26 proteasome which is involved in the ATP-dependent degradation of ubiquitinated proteins. Required during embryogenesis. Required for optimal plant growth and stress responses. Required for innate immunity. Prevents JMJ27 accumulation in non-drought conditions. The chain is 26S proteasome non-ATPase regulatory subunit 2 homolog A from Arabidopsis thaliana (Mouse-ear cress).